The following is a 380-amino-acid chain: Tomoregulin-1 (380 aa).

A signal peptide spans 1–39; it reads MGAAAAEAPLRLPAAPPLAFCCYTSVLLLFAFSLPGSRA. Residues 40–330 are Extracellular-facing; the sequence is SNQPPGGGGG…VPSRQKLTHV (291 aa). 2 Kazal-like domains span residues 98–145 and 189–237; these read ACQF…PCYS and VCNI…HCTD. 9 disulfides stabilise this stretch: Cys-99-Cys-129, Cys-103-Cys-122, Cys-111-Cys-143, Cys-190-Cys-221, Cys-194-Cys-214, Cys-203-Cys-235, Cys-275-Cys-288, Cys-283-Cys-299, and Cys-301-Cys-310. The EGF-like domain occupies 271 to 311; it reads NHMPCPENLNGYCIHGKCEFIYSTQKASCRCESGYTGQHCE. The helical transmembrane segment at 331 to 351 threads the bilayer; the sequence is LIAAIIGAVQIAIIVAIVMCI. Residues 352–380 lie on the Cytoplasmic side of the membrane; sequence TRKCPKNNRGRRQKQNLGHFTSDTSSRMV. The interval 359–380 is disordered; that stretch reads NRGRRQKQNLGHFTSDTSSRMV. The span at 366-380 shows a compositional bias: polar residues; that stretch reads QNLGHFTSDTSSRMV.

It belongs to the tomoregulin family. May interact with ST14. Expressed predominantly in brain, and at lower levels in heart, placenta and skeletal muscle. Down-regulated in brain tumors as compared to control brain tissues.

The protein resides in the cell membrane. Its function is as follows. Neuron-specific restriction factor that prevents herpes simplex virus 1 (HHV-1) infection in the brain by blocking viral entry. Also able to restrict herpes simplex virus 2 (HHV-2) infection, although to a lesser extent. Acts by preventing the association between the viral glycoprotein D (gD) and its cell surface receptor NECTIN1, thereby inhibiting fusion of the virus and the cell membrane. Also able to prevent the association between the viral glycoprotein B (gB) and MYH9/NMMHC-IIA and MYH10/NMMHC-IIB receptors. May be a tumor suppressor in brain cancers. The chain is Tomoregulin-1 from Homo sapiens (Human).